Consider the following 940-residue polypeptide: Beta-mannosidase A (940 aa).

An N-terminal signal peptide occupies residues 1-21; sequence MHFHGIATQAVLASNITTGSG. N-linked (GlcNAc...) asparagine glycans are attached at residues asparagine 15, asparagine 39, asparagine 79, asparagine 245, asparagine 314, asparagine 321, and asparagine 344. The active-site Proton donor is glutamate 476. 7 N-linked (GlcNAc...) asparagine glycosylation sites follow: asparagine 534, asparagine 605, asparagine 626, asparagine 653, asparagine 733, asparagine 761, and asparagine 785.

This sequence belongs to the glycosyl hydrolase 2 family. Beta-mannosidase A subfamily. Homodimer.

It localises to the secreted. The enzyme catalyses Hydrolysis of terminal, non-reducing beta-D-mannose residues in beta-D-mannosides.. It functions in the pathway glycan metabolism; N-glycan degradation. Its function is as follows. Exoglycosidase that cleaves the single beta-linked mannose residue from the non-reducing end of beta-mannosidic oligosaccharides of various complexity and length. Involved in the degradation of polymeric mannan and galactomannan. The protein is Beta-mannosidase A (mndA) of Emericella nidulans (strain FGSC A4 / ATCC 38163 / CBS 112.46 / NRRL 194 / M139) (Aspergillus nidulans).